We begin with the raw amino-acid sequence, 308 residues long: Glutaminase (308 aa).

Ser-68, Asn-118, Glu-162, Asn-169, Tyr-193, Tyr-244, and Val-262 together coordinate substrate.

It belongs to the glutaminase family. As to quaternary structure, homotetramer.

The catalysed reaction is L-glutamine + H2O = L-glutamate + NH4(+). The polypeptide is Glutaminase (Hahella chejuensis (strain KCTC 2396)).